A 981-amino-acid polypeptide reads, in one-letter code: Bifunctional glutamine synthetase adenylyltransferase/adenylyl-removing enzyme (981 aa).

Positions 1-473 (MTMPLPSIEQ…RSVFNNLIGF (473 aa)) are adenylyl removase. Residues 479–981 (ADDSDNAWSD…HQIWQKLFFE (503 aa)) form an adenylyl transferase region.

The protein belongs to the GlnE family. It depends on Mg(2+) as a cofactor.

The catalysed reaction is [glutamine synthetase]-O(4)-(5'-adenylyl)-L-tyrosine + phosphate = [glutamine synthetase]-L-tyrosine + ADP. It carries out the reaction [glutamine synthetase]-L-tyrosine + ATP = [glutamine synthetase]-O(4)-(5'-adenylyl)-L-tyrosine + diphosphate. Functionally, involved in the regulation of glutamine synthetase GlnA, a key enzyme in the process to assimilate ammonia. When cellular nitrogen levels are high, the C-terminal adenylyl transferase (AT) inactivates GlnA by covalent transfer of an adenylyl group from ATP to specific tyrosine residue of GlnA, thus reducing its activity. Conversely, when nitrogen levels are low, the N-terminal adenylyl removase (AR) activates GlnA by removing the adenylyl group by phosphorolysis, increasing its activity. The regulatory region of GlnE binds the signal transduction protein PII (GlnB) which indicates the nitrogen status of the cell. The chain is Bifunctional glutamine synthetase adenylyltransferase/adenylyl-removing enzyme from Mannheimia succiniciproducens (strain KCTC 0769BP / MBEL55E).